Consider the following 2326-residue polypeptide: Chondroitin sulfate proteoglycan 4 (2326 aa).

The signal sequence occupies residues 1-29 (MLLSPGHPLSAPALALILTLALLVRSTAP). 2 Laminin G-like domains span residues 30–193 (ASFF…HEGC) and 203–381 (VGLG…AAGC). The segment at 30–640 (ASFFGENHLE…HRGGPAQDLT (611 aa)) is globular or compact configuration stabilized by disulfide bonds. The tract at residues 30 to 640 (ASFFGENHLE…HRGGPAQDLT (611 aa)) is neurite growth inhibition. The Extracellular portion of the chain corresponds to 30–2225 (ASFFGENHLE…SGFLGFLEAN (2196 aa)). N-linked (GlcNAc...) asparagine glycosylation occurs at N130. Cysteines 170 and 193 form a disulfide. The N-linked (GlcNAc...) asparagine glycan is linked to N349. A disulfide bridge links C355 with C381. N428 carries an N-linked (GlcNAc...) asparagine glycan. 3 CSPG repeats span residues 429 to 524 (FTQL…LEVS), 554 to 646 (PRIV…VSDG), and 663 to 765 (AIQI…LEVQ). The segment at 575 to 1044 (GPEIFQAYDP…RGGQRLLTTD (470 aa)) is interaction with COL6A2. The interaction with COL5A1 stretch occupies residues 632–1450 (RGGPAQDLTF…SETQTDGFIL (819 aa)). Residues N686 and N773 are each glycosylated (N-linked (GlcNAc...) asparagine). CSPG repeat units lie at residues 784 to 882 (TVWM…FRVT) and 902 to 993 (NAPV…FVAT). An O-linked (Xyl...) (chondroitin sulfate) serine glycan is attached at S999. CSPG repeat units lie at residues 1022-1114 (APVQ…VSDG), 1130-1220 (YLHV…LSVA), 1242-1341 (PLQL…LDVA), 1360-1453 (TVIP…LLAN), 1477-1567 (PPVI…LSDG), 1585-1683 (LLSL…LLLS), 1708-1807 (PSRL…FRAH), 1836-1928 (PPQP…MSDG), and 1945-2033 (TIEV…VLAL). 2 N-linked (GlcNAc...) asparagine glycosylation sites follow: N1135 and N1206. N-linked (GlcNAc...) asparagine glycosylation is found at N1368 and N1453. The neurite growth inhibition stretch occupies residues 1590–2225 (GSRKLTVCPE…SGFLGFLEAN (636 aa)). Residues 1591–2225 (SRKLTVCPES…SGFLGFLEAN (635 aa)) are cysteine-containing. Residue N1649 is glycosylated (N-linked (GlcNAc...) asparagine). N1913, N2020, N2038, N2044, and N2079 each carry an N-linked (GlcNAc...) asparagine glycan. One copy of the CSPG 15 repeat lies at 2042 to 2151 (TVNVTVQALL…TGDRLTLELQ (110 aa)). A disordered region spans residues 2187-2210 (RTETEKTGKSTPTGQPGQAASSPM). Over residues 2195-2210 (KSTPTGQPGQAASSPM) the composition is skewed to polar residues. A helical membrane pass occupies residues 2226-2250 (MFSVIIPVCLVLLLLALILPLLFYL). Residues 2251 to 2326 (RKRNKTGKHD…PALRNGQYWV (76 aa)) are Cytoplasmic-facing. Position 2256 is a phosphothreonine; by PKC/PRKCA (T2256). Residues 2324–2326 (YWV) carry the PDZ-binding motif.

Interacts with GRIP1, GRIP2 and GRIA2. Forms a ternary complex with GRIP1 and GRIA2. Interacts with ITGA4 through its chondroitin sulfate glycosaminoglycan. Interacts with BCAR1, CDC42 and ACK1. Interacts with MMP16. Interacts with the first PDZ domain of MPDZ. Interacts with PRKCA. Interacts with LGALS3 and the integrin composed of ITGB1 and ITGA3. Binds TNC, laminin-1, COL5A1 and COL6A2. Interacts with PLG and angiostatin. Binds FGF2 and PDGFA. Post-translationally, N-glycosylated. O-glycosylated; contains glycosaminoglycan chondroitin sulfate which are required for proper localization and function in stress fiber formation. Involved in interaction with MMP16 and ITGA4. In terms of processing, phosphorylation by PRKCA regulates its subcellular location and function in cell motility. As to expression, neural cells and also extraneural tissues, especially in the developing mesenchyme.

Its subcellular location is the cell membrane. The protein localises to the apical cell membrane. The protein resides in the cell projection. It is found in the lamellipodium membrane. It localises to the cell surface. In terms of biological role, proteoglycan playing a role in cell proliferation and migration which stimulates endothelial cells motility during microvascular morphogenesis. May also inhibit neurite outgrowth and growth cone collapse during axon regeneration. Cell surface receptor for collagen alpha 2(VI) which may confer cells ability to migrate on that substrate. Binds through its extracellular N-terminus growth factors, extracellular matrix proteases modulating their activity. May regulate MPP16-dependent degradation and invasion of type I collagen participating in melanoma cells invasion properties. May modulate the plasminogen system by enhancing plasminogen activation and inhibiting angiostatin. Also functions as a signal transducing protein by binding through its cytoplasmic C-terminus scaffolding and signaling proteins. May promote retraction fiber formation and cell polarization through Rho GTPase activation. May stimulate alpha-4, beta-1 integrin-mediated adhesion and spreading by recruiting and activating a signaling cascade through CDC42, ACK1 and BCAR1. May activate FAK and ERK1/ERK2 signaling cascades. In Rattus norvegicus (Rat), this protein is Chondroitin sulfate proteoglycan 4 (Cspg4).